We begin with the raw amino-acid sequence, 907 residues long: CRM-domain containing factor CFM3B, chloroplastic (907 aa).

Residues 1–59 constitute a chloroplast transit peptide; sequence MAINSSHHFCPMTTTTTTSAKFVDSLGSSFCKFHGTSSSISLRSYRFGFSFMKNVKRLS. Disordered stretches follow at residues 62–89 and 101–123; these read GSSSSSSSRNENWNRTQKQNQFRPSKVV and LGVISGENSSRSGDVGGGSGSSS. A compositionally biased stretch (polar residues) spans 70-84; that stretch reads RNENWNRTQKQNQFR. CRM domains are found at residues 220–316 and 421–518; these read MTLS…DGSG and STLG…EVGE. Positions 621–654 form a coiled coil; the sequence is SAKLVRKLERKLAFAEKKLLKAERALAKVEESLK. The 101-residue stretch at 663–763 folds into the CRM 3 domain; it reads EGITEEERFM…KDYKRPTTLR (101 aa). Residues 824-907 form a disordered region; the sequence is MAYSSDEETE…LQNEELDVQP (84 aa). Acidic residues-rich tracts occupy residues 828–857 and 868–881; these read SDEETEETDGEEDDVYLDTYEDEGEDDEEG and TDVEFGSDESDTDF. Positions 882–897 are enriched in polar residues; the sequence is GDNSASSTTPETTFVE.

Interacts with RNA. Part of large ribonucleo-protein particles that contain CAF1 and/or CAF2, and RNC1. Interacts with RFC3 in plastids. In terms of tissue distribution, expressed at low levels in roots and shoots.

It is found in the plastid. The protein localises to the chloroplast. Functionally, binds specific group II introns in chloroplasts and facilitates their splicing. Exhibits non-specific action during plastid rRNA biogenesis; RFC3 prevents unaccurate splicing to improve the accuracy of plastid rRNA processing. Acts on subgroup IIB introns. The substrates of the subgroup IIB also require the CRM domain proteins CAF1 or CAF2, with a simultaneous binding of CFM3B and CAF1 or CAF2. Required for seed development. The chain is CRM-domain containing factor CFM3B, chloroplastic from Arabidopsis thaliana (Mouse-ear cress).